A 155-amino-acid polypeptide reads, in one-letter code: Protein-export protein SecB (155 aa).

Belongs to the SecB family. Homotetramer, a dimer of dimers. One homotetramer interacts with 1 SecA dimer.

It localises to the cytoplasm. In terms of biological role, one of the proteins required for the normal export of preproteins out of the cell cytoplasm. It is a molecular chaperone that binds to a subset of precursor proteins, maintaining them in a translocation-competent state. It also specifically binds to its receptor SecA. The sequence is that of Protein-export protein SecB from Klebsiella pneumoniae subsp. pneumoniae (strain ATCC 700721 / MGH 78578).